A 261-amino-acid polypeptide reads, in one-letter code: tRNA pseudouridine synthase A (261 aa).

D51 serves as the catalytic Nucleophile. Position 109 (Y109) interacts with substrate.

It belongs to the tRNA pseudouridine synthase TruA family. As to quaternary structure, homodimer.

The enzyme catalyses uridine(38/39/40) in tRNA = pseudouridine(38/39/40) in tRNA. Formation of pseudouridine at positions 38, 39 and 40 in the anticodon stem and loop of transfer RNAs. The protein is tRNA pseudouridine synthase A of Methylobacillus flagellatus (strain ATCC 51484 / DSM 6875 / VKM B-1610 / KT).